The chain runs to 670 residues: G-protein coupled receptor moody (670 aa).

At 1–40 the chain is on the extracellular side; that stretch reads MSDETTISLEDGYPPLEALTTMVPPADATGFSQSLLTFAA. Residues 41-61 form a helical membrane-spanning segment; that stretch reads VMTFLIMIVGICGNLLTVVAL. At 62–69 the chain is on the cytoplasmic side; sequence LKCPKVRN. The helical transmembrane segment at 70-90 threads the bilayer; it reads VAAAFIISLCIADLLFCALVL. At 91-111 the chain is on the extracellular side; it reads PFQGLRFVQGTWRHGQVLCRL. A disulfide bridge connects residues Cys109 and Cys188. Residues 112–132 form a helical membrane-spanning segment; the sequence is IPFIQYGNIGVSLLCIAMITI. Over 133–152 the chain is Cytoplasmic; that stretch reads NRYVMITHHGLYARIYKRHW. Residues 153–173 form a helical membrane-spanning segment; that stretch reads IAVMIAACWLFSYGMQLPTLL. Residues 174 to 202 are Extracellular-facing; it reads GEWGRFGYDSRLQTCSIMTDDHGHSSKTT. A helical transmembrane segment spans residues 203-223; sequence LFITAFVIPCLVIIACYAKIF. The Cytoplasmic segment spans residues 224-313; that stretch reads WVVHKSEQRL…AKRNEWRITK (90 aa). The tract at residues 258–302 is disordered; the sequence is LPSGAECQPSNRVSSDSSSSFSIDVPETAPSGKQQPTRVKDQREV. Residues 267 to 279 show a composition bias toward low complexity; sequence SNRVSSDSSSSFS. The helical transmembrane segment at 314–334 threads the bilayer; sequence MVLAIFLSFVVCYLPITIVKV. Residues 335–345 are Extracellular-facing; sequence ADKNVEHPSLH. Residues 346-366 traverse the membrane as a helical segment; it reads ICSYILLYLSACINPIIYVIM. Over 367–670 the chain is Cytoplasmic; sequence NKQYRKAYKT…LTAKMKFPKD (304 aa). 3 disordered regions span residues 461-490, 562-622, and 636-670; these read DLIS…GSNS, ELPP…YMNV, and TNAV…FPKD. Positions 564–584 are enriched in pro residues; that stretch reads PPTPPATSAPTTPAPPPPSSP. Residues 585–598 show a composition bias toward low complexity; it reads LHPLSTDSSTTTIS. Positions 646–660 are enriched in polar residues; the sequence is GPANTSATVSISGSK.

This sequence belongs to the G-protein coupled receptor 1 family. Isoform A and isoform B are expressed in the head. Isoform B only is expressed in the body. Expressed in embryonic glial cells that are involved in ensheathment and insulation of the nervous system. Both isoforms are expressed in glia that insulate the larval and adult nervous system. Also expressed in the germ cells, the gut, and the heart.

Its subcellular location is the cell membrane. Isoform A and isoform B are required in glia to regulate the acute sensitivity to cocaine and to continuously maintain the proper blood-brain barrier (BBB) function. A moody-mediated signaling pathway functions in glia to regulate nervous system insulation and drug-related behaviors. Galphai and Galphao, and the regulator of G protein signaling, loco, are required in the surface glia to achieve effective insulation. The components function by regulating the cortical actin and thereby stabilizing the extended morphology of the surface glia, which in turn is necessary for the formation of septate junctions of sufficient length to achieve proper sealing of the nerve cord. This chain is G-protein coupled receptor moody, found in Drosophila melanogaster (Fruit fly).